A 348-amino-acid polypeptide reads, in one-letter code: Fructose-1,6-bisphosphatase class 1 (348 aa).

Mg(2+) contacts are provided by Glu-104, Asp-126, Leu-128, and Asp-129. Substrate contacts are provided by residues 129–132, Asn-221, Tyr-249, and Lys-279; that span reads DGSS. Glu-285 is a Mg(2+) binding site.

Belongs to the FBPase class 1 family. As to quaternary structure, homotetramer. It depends on Mg(2+) as a cofactor.

The protein localises to the cytoplasm. It carries out the reaction beta-D-fructose 1,6-bisphosphate + H2O = beta-D-fructose 6-phosphate + phosphate. Its pathway is carbohydrate biosynthesis; Calvin cycle. The sequence is that of Fructose-1,6-bisphosphatase class 1 from Thermosynechococcus vestitus (strain NIES-2133 / IAM M-273 / BP-1).